Here is a 601-residue protein sequence, read N- to C-terminus: Glutamyl-tRNA(Gln) amidotransferase subunit B, mitochondrial (601 aa).

Residues 1 to 52 (MLQQWLRQSPGAARFLRGSCCRGPQSGSLRHSPLPTAPHRCIRSLQTSATES) constitute a mitochondrion transit peptide.

Belongs to the GatB/GatE family. GatB subfamily. Subunit of the heterotrimeric GatCAB amidotransferase (AdT) complex, composed of A, B and C subunits.

It localises to the mitochondrion. It catalyses the reaction L-glutamyl-tRNA(Gln) + L-glutamine + ATP + H2O = L-glutaminyl-tRNA(Gln) + L-glutamate + ADP + phosphate + H(+). Allows the formation of correctly charged Gln-tRNA(Gln) through the transamidation of misacylated Glu-tRNA(Gln) in the mitochondria. The reaction takes place in the presence of glutamine and ATP through an activated gamma-phospho-Glu-tRNA(Gln). In Neosartorya fischeri (strain ATCC 1020 / DSM 3700 / CBS 544.65 / FGSC A1164 / JCM 1740 / NRRL 181 / WB 181) (Aspergillus fischerianus), this protein is Glutamyl-tRNA(Gln) amidotransferase subunit B, mitochondrial.